The sequence spans 1071 residues: Exportin-1 (1071 aa).

Positions 46–112 (AQEVLTHLKE…KKYVVGLIIK (67 aa)) constitute an Importin N-terminal domain. HEAT repeat units follow at residues 217–240 (QNAP…PLGY), 241–277 (IFET…VSVS), 354–472 (MLLV…YVDT), 515–553 (RFLV…QYPR), 560–597 (KFLK…KCRR), and 602–639 (VQVG…AVGY). Residues 327 to 450 (CTFLKEHGQL…VREFMKDTDS (124 aa)) are necessary for interaction with Ran and nuclear export complex formation. A Phosphoserine modification is found at S391. The segment at 411-481 (TVLSKVRLLM…TEIIMTKKLQ (71 aa)) is necessary for interaction with RANBP3. Residue K446 is modified to N6-acetyllysine. T448 carries the phosphothreonine modification. S450 is modified (phosphoserine). Y454 carries the post-translational modification Phosphotyrosine. The residue at position 693 (K693) is an N6-acetyllysine. HEAT repeat units follow at residues 775–813 (NFVP…KLGG), 885–916 (TMRN…SFYQ), 917–954 (TYFC…NLVE), and 1002–1039 (FSLN…EERE). At S1031 the chain carries Phosphoserine.

This sequence belongs to the exportin family. As to quaternary structure, found in a U snRNA export complex with PHAX/RNUXA, NCBP1/CBP80, NCBP2/CBP20, RAN, XPO1 and m7G-capped RNA. Component of a nuclear export receptor complex composed of KPNB1, RAN, SNUPN and XPO1. Found in a trimeric export complex with SNUPN, RAN and XPO1. Found in a nuclear export complex with RANBP3 and RAN. Found in a 60S ribosomal subunit export complex with NMD3, RAN, XPO1. Interacts with DDX3X, NMD3, NUP42, NUP88, NUP214, RANBP3 and TERT. Interacts with NEMF (via its N-terminus). Interacts with the monomeric form of BIRC5/survivin deacetylated at 'Lys-129'. Interacts with SERTAD2; the interaction translocates SERTAD2 out of the nucleus. Interacts with ATF2. Interacts with SLC35G1 and STIM1. Interacts with DCAF8. Interacts with DTNBP1 and the interaction translocates DTNBP1 out of the nucleus. Interacts with CPEB3. Interacts with HAX1. Interacts with BOK; translocates to the cytoplasm. Interacts with HSP90AB1. Interacts with LRPPRC; interacts with LRPPRC alone and also when LRPPRC is in complex with EIF4E and with EIF4E sensitivity element (4ESE)-containing mRNAs to form an EIF4E-dependent mRNA export complex.

The protein localises to the cytoplasm. The protein resides in the nucleus. It localises to the nucleoplasm. Its subcellular location is the cajal body. It is found in the nucleolus. Functionally, mediates the nuclear export of cellular proteins (cargos) bearing a leucine-rich nuclear export signal (NES) and of RNAs. In the nucleus, in association with RANBP3, binds cooperatively to the NES on its target protein and to the GTPase Ran in its active GTP-bound form. Docking of this complex to the nuclear pore complex (NPC) is mediated through binding to nucleoporins. Upon transit of a nuclear export complex into the cytoplasm, disassembling of the complex and hydrolysis of Ran-GTP to Ran-GDP (induced by RANBP1 and RANGAP1, respectively) cause release of the cargo from the export receptor. The directionality of nuclear export is thought to be conferred by an asymmetric distribution of the GTP- and GDP-bound forms of Ran between the cytoplasm and nucleus. Involved in U3 snoRNA transport from Cajal bodies to nucleoli. Binds to late precursor U3 snoRNA bearing a TMG cap. In Mus musculus (Mouse), this protein is Exportin-1 (Xpo1).